We begin with the raw amino-acid sequence, 202 residues long: Transmembrane protein 223 (202 aa).

Topologically, residues methionine 1–arginine 43 are mitochondrial matrix. The helical transmembrane segment at phenylalanine 44–isoleucine 64 threads the bilayer. The Mitochondrial intermembrane portion of the chain corresponds to alanine 65–glycine 97. Residues leucine 98 to leucine 118 traverse the membrane as a helical segment. At arginine 119–leucine 202 the chain is on the mitochondrial matrix side.

Belongs to the TMEM223 family. As to quaternary structure, associates with the mitochondrial ribosome.

It localises to the mitochondrion inner membrane. In terms of biological role, mitochondrial ribosome-associated protein involved in the first steps of cytochrome c oxidase complex (complex IV) biogenesis. Stimulates the translation of MT-CO1 mRNA and is a constituent of early MT-CO1 assembly intermediates. This is Transmembrane protein 223 from Bos taurus (Bovine).